Reading from the N-terminus, the 148-residue chain is UPF0735 ACT domain-containing protein Dred_1164 (148 aa).

The region spanning 72–147 (TLALLMEHQP…GVREVRLVGQ (76 aa)) is the ACT domain.

The protein belongs to the UPF0735 family.

The chain is UPF0735 ACT domain-containing protein Dred_1164 from Desulforamulus reducens (strain ATCC BAA-1160 / DSM 100696 / MI-1) (Desulfotomaculum reducens).